Here is a 186-residue protein sequence, read N- to C-terminus: UPF0301 protein Swit_2673 (186 aa).

The protein belongs to the UPF0301 (AlgH) family.

This is UPF0301 protein Swit_2673 from Rhizorhabdus wittichii (strain DSM 6014 / CCUG 31198 / JCM 15750 / NBRC 105917 / EY 4224 / RW1) (Sphingomonas wittichii).